Consider the following 875-residue polypeptide: Alanine--tRNA ligase (875 aa).

Residues His-564, His-568, Cys-666, and His-670 each contribute to the Zn(2+) site.

This sequence belongs to the class-II aminoacyl-tRNA synthetase family. In terms of assembly, homotetramer. The cofactor is Zn(2+).

The protein localises to the cytoplasm. The enzyme catalyses tRNA(Ala) + L-alanine + ATP = L-alanyl-tRNA(Ala) + AMP + diphosphate. Functionally, catalyzes the attachment of alanine to tRNA(Ala) in a two-step reaction: alanine is first activated by ATP to form Ala-AMP and then transferred to the acceptor end of tRNA(Ala). Also edits incorrectly charged Ser-tRNA(Ala) and Gly-tRNA(Ala) via its editing domain. The sequence is that of Alanine--tRNA ligase from Klebsiella pneumoniae subsp. pneumoniae (strain ATCC 700721 / MGH 78578).